The chain runs to 371 residues: Leu/Ile/Val-binding protein homolog 1 (371 aa).

A signal peptide spans 1 to 23 (MRKTLFSGVALAAVIAFGGSAWA).

The protein belongs to the leucine-binding protein family.

Its function is as follows. Component of an amino-acid transport system. The protein is Leu/Ile/Val-binding protein homolog 1 of Brucella abortus (strain 2308).